A 54-amino-acid chain; its full sequence is Protein GndA (54 aa).

Residues 28 to 50 (LFVVIVSFQQRALTSSVPVFLAV) traverse the membrane as a helical segment.

It localises to the cell inner membrane. The polypeptide is Protein GndA (Escherichia coli (strain K12)).